We begin with the raw amino-acid sequence, 336 residues long: Mitochondrial thiamine diphosphate carrier 1 (336 aa).

Helical transmembrane passes span 11–27, 88–105, 127–150, 182–199, 230–246, and 303–322; these read RRALVDSLAGAISGGIS, VPALFMYMPYTAIQFTVL, YLSYVSGAIAGCTATIGSYPFDLL, LYSGLSPTLVEIIPYAGL, SVSSFQLFLCGFAAGTF, and GLFPSLVKSAPAGAVTFVVY. Solcar repeat units follow at residues 11–111, 124–210, and 231–328; these read RRAL…LKTF, LSPY…FKRS, and VSSF…ISDW.

Belongs to the mitochondrial carrier (TC 2.A.29) family. Ubiquitous with highest expression in pollen.

The protein resides in the mitochondrion inner membrane. Mitochondrial transporter that mediates uptake of thiamine diphosphate (ThDP) into mitochondria. This is Mitochondrial thiamine diphosphate carrier 1 from Zea mays (Maize).